A 120-amino-acid polypeptide reads, in one-letter code: Protein BEX4 (120 aa).

Residues 1-54 (MESKEELAANNLNGENAQQENEGGEQAPTQNEEESRHLGGGEGQKPGGNIRRGR) form a disordered region. The segment covering 8–27 (AANNLNGENAQQENEGGEQA) has biased composition (low complexity). Residues 31 to 90 (NEEESRHLGGGEGQKPGGNIRRGRVRRLVPNFRWAIPNRHIEHNEARDDVERFVGQMMEI) form an interaction with SIRT2 region. An interaction with alpha-tubulin region spans residues 31–120 (NEEESRHLGG…DNHYDFCLIP (90 aa)). Residue Cys117 participates in Zn(2+) binding.

This sequence belongs to the BEX family. Interacts with alpha-tubulin. Interacts with SIRT2. In terms of processing, ubiquitinated and degraded by the proteasome. Very high expression in heart, skeletal muscle, liver, and kidney. The levels of expression are uniform throughout the brain.

It localises to the cytoplasm. Its subcellular location is the cytoskeleton. The protein localises to the spindle pole. The protein resides in the nucleus. Its function is as follows. May play a role in microtubule deacetylation by negatively regulating the SIRT2 deacetylase activity toward alpha-tubulin and thereby participate in the control of cell cycle progression and genomic stability. In absence of reductive stress, acts as a pseudosubstrate for the CRL2(FEM1B) complex: associates with FEM1B via zinc, thereby preventing association between FEM1B and its substrates. This is Protein BEX4 from Homo sapiens (Human).